The primary structure comprises 278 residues: Release factor glutamine methyltransferase (278 aa).

Residues 117–121 (GTGSG), Asp-140, and Asn-184 contribute to the S-adenosyl-L-methionine site. 184–187 (NPPY) is a substrate binding site.

Belongs to the protein N5-glutamine methyltransferase family. PrmC subfamily.

The enzyme catalyses L-glutaminyl-[peptide chain release factor] + S-adenosyl-L-methionine = N(5)-methyl-L-glutaminyl-[peptide chain release factor] + S-adenosyl-L-homocysteine + H(+). Functionally, methylates the class 1 translation termination release factors RF1/PrfA and RF2/PrfB on the glutamine residue of the universally conserved GGQ motif. The polypeptide is Release factor glutamine methyltransferase (Staphylococcus aureus (strain NCTC 8325 / PS 47)).